The following is a 193-amino-acid chain: Auxin-responsive protein IAA23 (193 aa).

Over residues 1-12 the composition is skewed to polar residues; the sequence is MSTSSGADSSPP. Positions 1 to 66 are disordered; that stretch reads MSTSSGADSS…SPKARAVGWP (66 aa). The segment covering 21 to 36 has biased composition (low complexity); it reads TALTLALPGSSSSSSS. Positions 23–27 match the EAR-like (transcriptional repression) motif; the sequence is LTLAL. Residues 39-53 are compositionally biased toward basic and acidic residues; the sequence is DPERKRAAHADHADA. A PB1 domain is found at 83-191; the sequence is AKLVKVAVDG…EAVNLSPRRS (109 aa).

Belongs to the Aux/IAA family. In terms of assembly, homodimers and heterodimers. In terms of tissue distribution, highly expressed in roots. Expressed in seedlings.

It localises to the nucleus. Aux/IAA proteins are short-lived transcriptional factors that function as repressors of early auxin response genes at low auxin concentrations. In Oryza sativa subsp. japonica (Rice), this protein is Auxin-responsive protein IAA23 (IAA23).